The primary structure comprises 505 residues: Trans-cinnamate 4-monooxygenase (505 aa).

A helical transmembrane segment spans residues 3–23 (LLLLEKTLLGSFVAVLVAILV). (E)-cinnamate-binding positions include 213 to 218 (RSRLAQ) and A306. C447 serves as a coordination point for heme.

The protein belongs to the cytochrome P450 family. Heme is required as a cofactor.

It is found in the membrane. The enzyme catalyses (E)-cinnamate + reduced [NADPH--hemoprotein reductase] + O2 = (E)-4-coumarate + oxidized [NADPH--hemoprotein reductase] + H2O + H(+). Its pathway is phenylpropanoid metabolism; trans-4-coumarate biosynthesis; trans-4-coumarate from trans-cinnamate: step 1/1. Catalyzes the first oxidative step of the phenylpropanoid pathway in higher plants by transforming trans-cinnamate into p-coumarate. The compounds formed by this pathway are essential components for lignification, pollination, and defense against ultraviolet light, predators and pathogens. The chain is Trans-cinnamate 4-monooxygenase (CYP73A16) from Populus kitakamiensis (Aspen).